The chain runs to 248 residues: Ubiquinone/menaquinone biosynthesis C-methyltransferase UbiE (248 aa).

S68 and D92 together coordinate S-adenosyl-L-methionine.

Belongs to the class I-like SAM-binding methyltransferase superfamily. MenG/UbiE family.

It carries out the reaction a 2-demethylmenaquinol + S-adenosyl-L-methionine = a menaquinol + S-adenosyl-L-homocysteine + H(+). It catalyses the reaction a 2-methoxy-6-(all-trans-polyprenyl)benzene-1,4-diol + S-adenosyl-L-methionine = a 5-methoxy-2-methyl-3-(all-trans-polyprenyl)benzene-1,4-diol + S-adenosyl-L-homocysteine + H(+). It functions in the pathway quinol/quinone metabolism; menaquinone biosynthesis; menaquinol from 1,4-dihydroxy-2-naphthoate: step 2/2. The protein operates within cofactor biosynthesis; ubiquinone biosynthesis. Methyltransferase required for the conversion of demethylmenaquinol (DMKH2) to menaquinol (MKH2) and the conversion of 2-polyprenyl-6-methoxy-1,4-benzoquinol (DDMQH2) to 2-polyprenyl-3-methyl-6-methoxy-1,4-benzoquinol (DMQH2). The sequence is that of Ubiquinone/menaquinone biosynthesis C-methyltransferase UbiE from Rickettsia peacockii (strain Rustic).